A 1382-amino-acid chain; its full sequence is DNA-directed RNA polymerase subunit beta (1382 aa).

The protein belongs to the RNA polymerase beta chain family. As to quaternary structure, the RNAP catalytic core consists of 2 alpha, 1 beta, 1 beta' and 1 omega subunit. When a sigma factor is associated with the core the holoenzyme is formed, which can initiate transcription.

The catalysed reaction is RNA(n) + a ribonucleoside 5'-triphosphate = RNA(n+1) + diphosphate. Its function is as follows. DNA-dependent RNA polymerase catalyzes the transcription of DNA into RNA using the four ribonucleoside triphosphates as substrates. In Anaplasma marginale (strain Florida), this protein is DNA-directed RNA polymerase subunit beta.